We begin with the raw amino-acid sequence, 23 residues long: U1-poneritoxin-Da3b (23 aa).

It belongs to the non-disulfide-bridged peptide (NDBP) superfamily. Medium-length antimicrobial peptide (group 3) family. Ponericin-W subfamily. Expressed by the venom gland.

It localises to the secreted. The protein resides in the target cell membrane. In terms of biological role, may have antimicrobial properties, like most ant linear peptides. May act by disrupting the integrity of the bacterial cell membrane. This is U1-poneritoxin-Da3b from Dinoponera australis (Giant neotropical hunting ant).